The following is a 117-amino-acid chain: NADH-ubiquinone oxidoreductase chain 3 (117 aa).

The next 3 membrane-spanning stretches (helical) occupy residues 1 to 21 (MLML…VMML), 58 to 78 (FLIA…LPMI), and 86 to 106 (LMNW…GLYH).

The protein belongs to the complex I subunit 3 family.

It is found in the mitochondrion membrane. The enzyme catalyses a ubiquinone + NADH + 5 H(+)(in) = a ubiquinol + NAD(+) + 4 H(+)(out). Core subunit of the mitochondrial membrane respiratory chain NADH dehydrogenase (Complex I) that is believed to belong to the minimal assembly required for catalysis. Complex I functions in the transfer of electrons from NADH to the respiratory chain. The immediate electron acceptor for the enzyme is believed to be ubiquinone. This chain is NADH-ubiquinone oxidoreductase chain 3 (mt:ND3), found in Anopheles gambiae (African malaria mosquito).